The sequence spans 435 residues: Galactomannan galactosyltransferase 1 (435 aa).

Residues 1–20 (MAKFGSRNKSPKWISNGCCF) lie on the Cytoplasmic side of the membrane. The chain crosses the membrane as a helical; Signal-anchor for type II membrane protein span at residues 21-41 (LLGAFTALLLLWGLCSFIIPI). At 42–435 (PNTDPKLNSV…SPLPFGYPAA (394 aa)) the chain is on the lumenal side. N-linked (GlcNAc...) asparagine glycans are attached at residues N230 and N328. A coiled-coil region spans residues 321 to 354 (EIVKTYENISERYDEVERKVEGLRRRHAEKVSEK).

This sequence belongs to the glycosyltransferase 34 family.

The protein resides in the golgi apparatus membrane. Its function is as follows. Galactomannan galactosyltransferase (GMGT) involved in galactomannan biosynthesis in seed endosperm. GMGT specificity is an important factor regulating the distribution and amount of alpha-1,6-galactose (Gal) substitution of the beta-1,4-linked mannan backbone. This Cyamopsis tetragonoloba (Guar) protein is Galactomannan galactosyltransferase 1 (GMGT1).